The chain runs to 437 residues: uncharacterized protein (437 aa).

Residues 47–67 (LLIILIGFILLSSISAIQIDA) traverse the membrane as a helical segment.

It is found in the membrane. This is an uncharacterized protein from Methanocaldococcus jannaschii (strain ATCC 43067 / DSM 2661 / JAL-1 / JCM 10045 / NBRC 100440) (Methanococcus jannaschii).